The following is a 204-amino-acid chain: Phosphatidylserine decarboxylase proenzyme (204 aa).

Residue Ser169 is the Schiff-base intermediate with substrate; via pyruvic acid of the active site. Ser169 carries the post-translational modification Pyruvic acid (Ser); by autocatalysis.

The protein belongs to the phosphatidylserine decarboxylase family. PSD-A subfamily. As to quaternary structure, heterodimer of a large membrane-associated beta subunit and a small pyruvoyl-containing alpha subunit. Pyruvate is required as a cofactor. Is synthesized initially as an inactive proenzyme. Formation of the active enzyme involves a self-maturation process in which the active site pyruvoyl group is generated from an internal serine residue via an autocatalytic post-translational modification. Two non-identical subunits are generated from the proenzyme in this reaction, and the pyruvate is formed at the N-terminus of the alpha chain, which is derived from the carboxyl end of the proenzyme. The post-translation cleavage follows an unusual pathway, termed non-hydrolytic serinolysis, in which the side chain hydroxyl group of the serine supplies its oxygen atom to form the C-terminus of the beta chain, while the remainder of the serine residue undergoes an oxidative deamination to produce ammonia and the pyruvoyl prosthetic group on the alpha chain.

It localises to the cell membrane. It carries out the reaction a 1,2-diacyl-sn-glycero-3-phospho-L-serine + H(+) = a 1,2-diacyl-sn-glycero-3-phosphoethanolamine + CO2. It functions in the pathway phospholipid metabolism; phosphatidylethanolamine biosynthesis; phosphatidylethanolamine from CDP-diacylglycerol: step 2/2. Catalyzes the formation of phosphatidylethanolamine (PtdEtn) from phosphatidylserine (PtdSer). The chain is Phosphatidylserine decarboxylase proenzyme from Solibacter usitatus (strain Ellin6076).